The chain runs to 473 residues: Suppressor of SWI4 1 homolog (473 aa).

The 264-residue stretch at 29–292 folds into the Brix domain; the sequence is PHSFVFTRGC…LIKVQEGVGE (264 aa). Residues serine 238 and serine 240 each carry the phosphoserine modification. The segment at 323–473 is disordered; that stretch reads AQRQAQQAQN…GRGRPRKRVA (151 aa). Residues 324 to 334 are compositionally biased toward low complexity; that stretch reads QRQAQQAQNVQ. The segment covering 335–360 has biased composition (basic and acidic residues); sequence RKQEQREAHRKKSLEGMKKARVRGGD. A compositionally biased stretch (acidic residues) spans 376–388; that stretch reads GEDDDEQEDDDIE. The span at 407–421 shows a compositional bias: basic residues; the sequence is KRKRLAKSPGQKRKR. Residues 422 to 444 are compositionally biased toward basic and acidic residues; the sequence is REMDRGRGRLCDQKFPKPKDKSH. Lysine 438 carries the post-translational modification N6-acetyllysine. The segment covering 464–473 has biased composition (basic residues); sequence GRGRPRKRVA.

The protein localises to the nucleus. It localises to the nucleolus. Its function is as follows. May have a role in cell growth. This Pongo abelii (Sumatran orangutan) protein is Suppressor of SWI4 1 homolog (PPAN).